The sequence spans 1034 residues: Translation initiation factor IF-2 (1034 aa).

Disordered regions lie at residues 118–140 (AAEA…QSVE) and 154–446 (EAEA…NESA). Composition is skewed to low complexity over residues 162-178 (TPPV…AAAP) and 212-228 (PAVK…PAAS). Positions 304 to 315 (DRAREDARRAAE) are enriched in basic and acidic residues. Residues 535–702 (PRAPVVTVMG…NVLLQAEILE (168 aa)) enclose the tr-type G domain. The interval 544–551 (GHVDHGKT) is G1. 544 to 551 (GHVDHGKT) lines the GTP pocket. The interval 569–573 (GITQH) is G2. Residues 590 to 593 (DTPG) are G3. GTP contacts are provided by residues 590–594 (DTPGH) and 644–647 (NKID). The tract at residues 644 to 647 (NKID) is G4. A G5 region spans residues 680–682 (SAK).

This sequence belongs to the TRAFAC class translation factor GTPase superfamily. Classic translation factor GTPase family. IF-2 subfamily.

It is found in the cytoplasm. Its function is as follows. One of the essential components for the initiation of protein synthesis. Protects formylmethionyl-tRNA from spontaneous hydrolysis and promotes its binding to the 30S ribosomal subunits. Also involved in the hydrolysis of GTP during the formation of the 70S ribosomal complex. The polypeptide is Translation initiation factor IF-2 (Bordetella avium (strain 197N)).